The chain runs to 178 residues: Peptide methionine sulfoxide reductase MsrA (178 aa).

Cysteine 11 is a catalytic residue.

This sequence belongs to the MsrA Met sulfoxide reductase family.

It carries out the reaction L-methionyl-[protein] + [thioredoxin]-disulfide + H2O = L-methionyl-(S)-S-oxide-[protein] + [thioredoxin]-dithiol. The enzyme catalyses [thioredoxin]-disulfide + L-methionine + H2O = L-methionine (S)-S-oxide + [thioredoxin]-dithiol. Functionally, has an important function as a repair enzyme for proteins that have been inactivated by oxidation. Catalyzes the reversible oxidation-reduction of methionine sulfoxide in proteins to methionine. This chain is Peptide methionine sulfoxide reductase MsrA, found in Natronomonas pharaonis (strain ATCC 35678 / DSM 2160 / CIP 103997 / JCM 8858 / NBRC 14720 / NCIMB 2260 / Gabara) (Halobacterium pharaonis).